Here is a 371-residue protein sequence, read N- to C-terminus: Histidinol-phosphate aminotransferase (371 aa).

Lys-221 is subject to N6-(pyridoxal phosphate)lysine.

The protein belongs to the class-II pyridoxal-phosphate-dependent aminotransferase family. Histidinol-phosphate aminotransferase subfamily. Homodimer. Requires pyridoxal 5'-phosphate as cofactor.

The enzyme catalyses L-histidinol phosphate + 2-oxoglutarate = 3-(imidazol-4-yl)-2-oxopropyl phosphate + L-glutamate. It participates in amino-acid biosynthesis; L-histidine biosynthesis; L-histidine from 5-phospho-alpha-D-ribose 1-diphosphate: step 7/9. This is Histidinol-phosphate aminotransferase from Pseudoalteromonas atlantica (strain T6c / ATCC BAA-1087).